The following is a 783-amino-acid chain: Tricorn protease-interacting factor F2 (783 aa).

Residues Glu-107 and 236-240 each bind substrate; that span reads GAMEN. His-271 contributes to the Zn(2+) binding site. Catalysis depends on Glu-272, which acts as the Proton acceptor. Positions 275 and 294 each coordinate Zn(2+).

This sequence belongs to the peptidase M1 family. Monomer. Part of the Tricorn proteolytic complex. The cofactor is Zn(2+).

It localises to the cytoplasm. In terms of biological role, proteases F1, F2 and F3 degrade oligopeptides produced by Tricorn (themselves probably produced by the proteasome), yielding free amino acids. The sequence is that of Tricorn protease-interacting factor F2 (trf2) from Thermoplasma acidophilum (strain ATCC 25905 / DSM 1728 / JCM 9062 / NBRC 15155 / AMRC-C165).